A 321-amino-acid chain; its full sequence is Peroxidase 4 (321 aa).

The first 25 residues, 1-25 (MASSSFSIVVVALGVLALFAGSSSA), serve as a signal peptide directing secretion. Pyrrolidone carboxylic acid is present on Gln26. Disulfide bonds link Cys36-Cys116, Cys69-Cys74, Cys122-Cys317, and Cys201-Cys226. The active-site Proton acceptor is His67. Asp68, Val71, Gly73, Asp75, and Ser77 together coordinate Ca(2+). Pro164 is a binding site for substrate. Residue His194 coordinates heme b. Thr195 lines the Ca(2+) pocket. A glycan (N-linked (GlcNAc...) asparagine) is linked at Asn210. Ca(2+)-binding residues include Asp241, Thr244, and Asp249.

Belongs to the peroxidase family. Classical plant (class III) peroxidase subfamily. Heme b is required as a cofactor. The cofactor is Ca(2+).

It is found in the secreted. The catalysed reaction is 2 a phenolic donor + H2O2 = 2 a phenolic radical donor + 2 H2O. Its function is as follows. Removal of H(2)O(2), oxidation of toxic reductants, biosynthesis and degradation of lignin, suberization, auxin catabolism, response to environmental stresses such as wounding, pathogen attack and oxidative stress. These functions might be dependent on each isozyme/isoform in each plant tissue. In Vitis vinifera (Grape), this protein is Peroxidase 4.